A 277-amino-acid polypeptide reads, in one-letter code: Methylamine utilization protein MauF (277 aa).

7 helical membrane passes run 33–53, 59–79, 111–131, 132–152, 179–199, 205–225, and 257–277; these read IAVL…LASA, LWAV…WSPC, YGLG…IAGF, SGFG…YGAH, WVIG…YVQT, MTLA…VALF, and ALAD…LALI.

It localises to the cell membrane. It participates in one-carbon metabolism; methylamine degradation. The protein is Methylamine utilization protein MauF (mauF) of Paracoccus denitrificans.